The chain runs to 162 residues: MARVEL domain-containing protein 1 (162 aa).

Residues 1-17 lie on the Cytoplasmic side of the membrane; it reads MPTQPQEKRSFLQFLKS. Residues 14–155 enclose the MARVEL domain; sequence FLKSFVGIVR…SGIYCSCRKC (142 aa). The chain crosses the membrane as a helical span at residues 18 to 38; that stretch reads FVGIVRVLQILLGAGLWVTIA. The Extracellular portion of the chain corresponds to 39-47; sequence ANKYEGSIH. Residues 48–68 form a helical membrane-spanning segment; that stretch reads FVLFVAVLFWLLTLAIFILTL. The Cytoplasmic segment spans residues 69–86; it reads LDKQDLVPIVGGERWLLS. The chain crosses the membrane as a helical span at residues 87–107; it reads NLIHDVVATLLYLSTIGIMIY. The Extracellular portion of the chain corresponds to 108–127; sequence KTQKNSYCNLDVYKHHCLYK. The helical transmembrane segment at 128-148 threads the bilayer; it reads VYLTASVFACLTAAVYLLSGI. At 149-162 the chain is on the cytoplasmic side; sequence YCSCRKCRGERTVV.

The protein resides in the membrane. It localises to the nucleus. This chain is MARVEL domain-containing protein 1 (marveld1), found in Danio rerio (Zebrafish).